Reading from the N-terminus, the 188-residue chain is dCTP deaminase (188 aa).

Residue 109–114 (KSTYAR) participates in dCTP binding. E135 acts as the Proton donor/acceptor in catalysis. Residues Q154, Y168, and Q178 each coordinate dCTP.

Belongs to the dCTP deaminase family. As to quaternary structure, homotrimer.

It catalyses the reaction dCTP + H2O + H(+) = dUTP + NH4(+). The protein operates within pyrimidine metabolism; dUMP biosynthesis; dUMP from dCTP (dUTP route): step 1/2. In terms of biological role, catalyzes the deamination of dCTP to dUTP. The sequence is that of dCTP deaminase from Helicobacter pylori (strain Shi470).